We begin with the raw amino-acid sequence, 391 residues long: Tyrosinase-like protein phomQ2 (391 aa).

Residues 1-21 are disordered; it reads MDNVGCEASSSRDPKGKKAVG. Residues 61-81 form a helical membrane-spanning segment; that stretch reads IRGFICATIIFVVCLGALSYI. 2 N-linked (GlcNAc...) asparagine glycosylation sites follow: Asn-97 and Asn-141. Cu cation is bound by residues His-160 and His-169. 3 N-linked (GlcNAc...) asparagine glycosylation sites follow: Asn-204, Asn-246, and Asn-261. Positions 298 and 324 each coordinate Cu cation. The N-linked (GlcNAc...) asparagine glycan is linked to Asn-353.

This sequence belongs to the tyrosinase family. Cu(2+) is required as a cofactor.

It localises to the membrane. It functions in the pathway mycotoxin biosynthesis. In terms of biological role, tyrosinase-like protein; part of the gene cluster that mediates the biosynthesis of the phomopsins, a group of hexapeptide mycotoxins which infects lupins and causes lupinosis disease in livestock. Within the pathway, phomQ2 is involved in the generation of the common 13-membered macrocycle, possibly by catalyzing the hydroxylation of Tyr. The pathway starts with the processing of the precursor phomA by several endopeptidases including kexin proteases as well as the cluster-specific S41 family peptidase phomP1 and the oligopeptidase phomG to produce 10 identical copies of the hexapeptide Tyr-Val-Ile-Pro-Ile-Asp. After being excised from the precursor peptide, the core peptides are cyclized and modified post-translationally by enzymes encoded within the gene cluster. The timing and order of proteolysis of the phomA precursor and PTMs are still unknown. Two tyrosinase-like enzymes, phomQ1 and phomQ2, catalyze the chlorination and hydroxylation of Tyr, respectively. PhomYb, is proposed to be involved in the construction of the macrocyclic structure. The other 4 ustYa family proteins may be involved in PTMs that generate the unique structure of phomopsin A. PhomYa is required for the hydroxylation of C-beta of Tyr. PhomYc, phomYd, and phomYe are responsible for the biosynthesis of 2,3-dehydroisoleucine (dIle), 2,3-dehydroaspartic acid (dAsp), and 3,4-dehydroproline (dPro), respectively. While dIle formation by phomYc is indispensable for the installation of dAsp by phomYd, the order of the other PTMs have not been elucidated yet. Most of the biosynthetic enzymes likely have broad substrate specificity, and thus, there might be a metabolic grid from a precursor to phomopsin A. The enzyme(s) responsible for the biosynthesis of 3,4-dehydrovaline (dVal) have also not been identified yet. Finally, phomM acts as an S-adenosylmethionine-dependent alpha-N-methyltransferase that catalyzes two successive N-methylation reactions, converting N-desmethyl-phomopsin A to phomopsin A and phomopsin A further to an N,N-dimethylated congener called phomopsin E. The polypeptide is Tyrosinase-like protein phomQ2 (Diaporthe leptostromiformis (Lupinosis disease fungus)).